Here is a 220-residue protein sequence, read N- to C-terminus: Large ribosomal subunit protein uL16 (220 aa).

This sequence belongs to the universal ribosomal protein uL16 family. In terms of assembly, component of the large ribosomal subunit. Mature ribosomes consist of a small (40S) and a large (60S) subunit. The 40S subunit contains about 32 different proteins and 1 molecule of RNA (18S). The 60S subunit contains 45 different proteins and 3 molecules of RNA (25S, 5.8S and 5S).

Its subcellular location is the cytoplasm. In terms of biological role, component of the ribosome, a large ribonucleoprotein complex responsible for the synthesis of proteins in the cell. The small ribosomal subunit (SSU) binds messenger RNAs (mRNAs) and translates the encoded message by selecting cognate aminoacyl-transfer RNA (tRNA) molecules. The large subunit (LSU) contains the ribosomal catalytic site termed the peptidyl transferase center (PTC), which catalyzes the formation of peptide bonds, thereby polymerizing the amino acids delivered by tRNAs into a polypeptide chain. The nascent polypeptides leave the ribosome through a tunnel in the LSU and interact with protein factors that function in enzymatic processing, targeting, and the membrane insertion of nascent chains at the exit of the ribosomal tunnel. In Candida albicans (strain SC5314 / ATCC MYA-2876) (Yeast), this protein is Large ribosomal subunit protein uL16.